The sequence spans 191 residues: Probable GTP-binding protein EngB (191 aa).

The 170-residue stretch at 22 to 191 (DFDHFLILGR…KLINEEFSNE (170 aa)) folds into the EngB-type G domain. Residues 30-37 (GRSNVGKS), 57-61 (GKTIT), 75-78 (DAPG), 142-145 (TKYD), and 172-174 (TSS) each bind GTP. The Mg(2+) site is built by Ser37 and Thr59.

This sequence belongs to the TRAFAC class TrmE-Era-EngA-EngB-Septin-like GTPase superfamily. EngB GTPase family. Mg(2+) is required as a cofactor.

In terms of biological role, necessary for normal cell division and for the maintenance of normal septation. The protein is Probable GTP-binding protein EngB of Acholeplasma laidlawii (strain PG-8A).